The primary structure comprises 359 residues: Heme A synthase (359 aa).

Transmembrane regions (helical) follow at residues 23–43, 85–105, 109–129, 137–157, 172–192, and 212–232; these read AVAFWLWSLAVLVFLMVVLGG, YAALFPDMDLAGFKFIFFFEW, LLGRLIGVATALPLLFFWLRG, LKLLGLLALGGLQGFVGWWMV, LAIHLILASLTFCFIVWLAAS, and AGLILLAILVQIGLGALVAGL. Residue H276 coordinates heme. Helical transmembrane passes span 278-298, 308-328, and 329-349; these read MVAYLVLGLTLLQVFWTSGTL, IALLGLVLAQVILGILTLVLV, and VPLWAGLLHQAFAMLVLGMAV. H337 lines the heme pocket.

This sequence belongs to the COX15/CtaA family. Type 2 subfamily. In terms of assembly, interacts with CtaB. Requires heme b as cofactor.

It localises to the cell membrane. The enzyme catalyses Fe(II)-heme o + 2 A + H2O = Fe(II)-heme a + 2 AH2. It participates in porphyrin-containing compound metabolism; heme A biosynthesis; heme A from heme O: step 1/1. In terms of biological role, catalyzes the conversion of heme O to heme A by two successive hydroxylations of the methyl group at C8. The first hydroxylation forms heme I, the second hydroxylation results in an unstable dihydroxymethyl group, which spontaneously dehydrates, resulting in the formyl group of heme A. This is Heme A synthase from Beijerinckia indica subsp. indica (strain ATCC 9039 / DSM 1715 / NCIMB 8712).